A 516-amino-acid polypeptide reads, in one-letter code: rRNA N(6)-adenosine-methyltransferase ZCCHC4 (516 aa).

Residues cysteine 40, histidine 42, cysteine 66, cysteine 75, cysteine 127, cysteine 130, histidine 142, and histidine 145 each coordinate Zn(2+). The GRF-type zinc finger occupies 40–84; sequence CPHELGPTLLFVKVNQGKEETRRFYACSACRDRKDCNFFQWEDEK. S-adenosyl-L-methionine-binding positions include 174 to 177, arginine 204, aspartate 227, 245 to 246, and aspartate 278; these read QYLF and NM. The regulatory loop stretch occupies residues 339-360; the sequence is QVVDYDNHALYKHGKTGRKQSP. Zn(2+) is bound by residues cysteine 383, cysteine 386, histidine 396, cysteine 397, cysteine 400, cysteine 403, histidine 413, cysteine 414, cysteine 417, cysteine 420, histidine 427, cysteine 428, cysteine 431, cysteine 434, histidine 439, and cysteine 441. In terms of domain architecture, DHHC spans 398 to 448; that stretch reads EHCNSCTSKDGRKWNHCFLCKKCVKPSWIHCSICNHCALPDHSCKGPKDGC. The CCHC-type zinc finger occupies 446 to 463; the sequence is DGCFICGELDHKRSACPN. The segment covering 472–484 has biased composition (basic residues); it reads KAVRKQKQRKSNK. The disordered stretch occupies residues 472–516; it reads KAVRKQKQRKSNKMKMETTKGQSMNHTSATRKKKRRERTHQYLCS. The span at 490 to 499 shows a compositional bias: polar residues; it reads TKGQSMNHTS. Residues 500–509 are compositionally biased toward basic residues; the sequence is ATRKKKRRER.

It belongs to the ZCCHC4 family. In terms of assembly, interacts with components of the ASC-1 complex TRIP4, ASCC1, ASCC2 and ASCC3. Interact with AHCYL1 and AHCYL2. Interact with YTHDC2.

It localises to the cytoplasm. It is found in the nucleus. Its subcellular location is the nucleolus. It carries out the reaction adenosine(4220) in 28S rRNA + S-adenosyl-L-methionine = N(6)-methyladenosine(4220) in 28S rRNA + S-adenosyl-L-homocysteine + H(+). In terms of biological role, rRNA N6-methyltransferase that specifically methylates the adenine in position 4220 of 28S rRNA. N6-methylation of adenine(4220) in 28S rRNA is required for translation. The chain is rRNA N(6)-adenosine-methyltransferase ZCCHC4 from Bos taurus (Bovine).